Here is a 267-residue protein sequence, read N- to C-terminus: Large ribosomal subunit protein mL57 (267 aa).

The span at serine 43–serine 54 shows a compositional bias: low complexity. A disordered region spans residues serine 43 to methionine 73.

It belongs to the ribonuclease III family. Mitochondrion-specific ribosomal protein mL57 subfamily. Component of the mitochondrial large ribosomal subunit (mt-LSU). Mature N.crassa 74S mitochondrial ribosomes consist of a small (37S) and a large (54S) subunit. The 37S small subunit contains a 16S ribosomal RNA (16S mt-rRNA) and 32 different proteins. The 54S large subunit contains a 23S rRNA (23S mt-rRNA) and 42 different proteins. mL57 forms a heterodimer with mL44 and stabilizes rRNA expansion segments 1/2 at a membrane-facing protuberance close to the point of attachment of the ribosome to the translocon in the membrane.

It is found in the mitochondrion. In terms of biological role, component of the mitochondrial ribosome (mitoribosome), a dedicated translation machinery responsible for the synthesis of mitochondrial genome-encoded proteins, including at least some of the essential transmembrane subunits of the mitochondrial respiratory chain. The mitoribosomes are attached to the mitochondrial inner membrane and translation products are cotranslationally integrated into the membrane. This is Large ribosomal subunit protein mL57 (mrpl15) from Neurospora crassa (strain ATCC 24698 / 74-OR23-1A / CBS 708.71 / DSM 1257 / FGSC 987).